The primary structure comprises 308 residues: Porphobilinogen deaminase (308 aa).

At Cys-240 the chain carries S-(dipyrrolylmethanemethyl)cysteine.

Belongs to the HMBS family. Monomer. Dipyrromethane serves as cofactor.

It catalyses the reaction 4 porphobilinogen + H2O = hydroxymethylbilane + 4 NH4(+). It functions in the pathway porphyrin-containing compound metabolism; protoporphyrin-IX biosynthesis; coproporphyrinogen-III from 5-aminolevulinate: step 2/4. Functionally, tetrapolymerization of the monopyrrole PBG into the hydroxymethylbilane pre-uroporphyrinogen in several discrete steps. This Laribacter hongkongensis (strain HLHK9) protein is Porphobilinogen deaminase.